Consider the following 87-residue polypeptide: Small ribosomal subunit protein uS15 (87 aa).

This sequence belongs to the universal ribosomal protein uS15 family. Part of the 30S ribosomal subunit. Forms a bridge to the 50S subunit in the 70S ribosome, contacting the 23S rRNA.

One of the primary rRNA binding proteins, it binds directly to 16S rRNA where it helps nucleate assembly of the platform of the 30S subunit by binding and bridging several RNA helices of the 16S rRNA. In terms of biological role, forms an intersubunit bridge (bridge B4) with the 23S rRNA of the 50S subunit in the ribosome. The chain is Small ribosomal subunit protein uS15 from Clostridium botulinum (strain Eklund 17B / Type B).